The chain runs to 79 residues: Small ribosomal subunit protein uS17 (79 aa).

The protein belongs to the universal ribosomal protein uS17 family. As to quaternary structure, part of the 30S ribosomal subunit.

In terms of biological role, one of the primary rRNA binding proteins, it binds specifically to the 5'-end of 16S ribosomal RNA. This Bartonella quintana (strain Toulouse) (Rochalimaea quintana) protein is Small ribosomal subunit protein uS17.